A 1017-amino-acid polypeptide reads, in one-letter code: Putative calcium-transporting ATPase 13, plasma membrane-type (1017 aa).

Position 1 is an N-acetylmethionine (methionine 1). Residues 1–147 (MRRNVSDHAE…NTYTRQPSKG (147 aa)) are Cytoplasmic-facing. The interaction with calmodulin stretch occupies residues 20–31 (LLELPKTLSKSN). A helical transmembrane segment spans residues 148–168 (LFHFVVEAFKDLTILILLGCA). Residues 169-186 (TLSLGFGIKEHGLKEGWY) lie on the Lumenal side of the membrane. The chain crosses the membrane as a helical span at residues 187 to 207 (DGGSIFVAVFLVVAVSAVSNF). Topologically, residues 208-336 (RQNRQFDKLS…NEQTPLQSRL (129 aa)) are cytoplasmic. A helical transmembrane segment spans residues 337 to 356 (DKLTSSIGKVGLLVAFLVLL). Residues 357 to 393 (VLLIRYFTGTTKDESGNREYNGKTTKSDEIVNAVVKM) are Lumenal-facing. A helical membrane pass occupies residues 394 to 411 (VAAAVTIIVVAIPEGLPL). At 412 to 802 (AVTLTLAYSM…KWGRCVYNNI (391 aa)) the chain is on the cytoplasmic side. The 4-aspartylphosphate intermediate role is filled by aspartate 449. Residues aspartate 747 and aspartate 751 each contribute to the Mg(2+) site. Residues 803–821 (QKFIQFQLTVNVAALVINF) traverse the membrane as a helical segment. The Lumenal segment spans residues 822 to 832 (VAAVSAGDVPL). A helical membrane pass occupies residues 833 to 853 (TAVQLLWVNLIMDTLGALALA). At 854–873 (TEKPTNDLMKKKPIGRVAPL) the chain is on the cytoplasmic side. Residues 874-896 (ITNIMWRNLLAQAFYQISVLLVL) form a helical membrane-spanning segment. The Lumenal segment spans residues 897-905 (QFRGRSIFN). A helical transmembrane segment spans residues 906–926 (VTEKVKNTLIFNTFVLCQVFN). The Cytoplasmic portion of the chain corresponds to 927 to 944 (EFNARSLEKKNVFKGLHK). The chain crosses the membrane as a helical span at residues 945 to 966 (NRLFIGIIVVTVVLQVVMVEFL). Residues 967–976 (KRFADTERLN) are Lumenal-facing. A helical membrane pass occupies residues 977-998 (LGQWGVCIAIAAASWPIGWLVK). Residues 999–1002 (SVPV) lie on the Cytoplasmic side of the membrane.

The protein belongs to the cation transport ATPase (P-type) (TC 3.A.3) family. Type IIB subfamily.

The protein localises to the membrane. It catalyses the reaction Ca(2+)(in) + ATP + H2O = Ca(2+)(out) + ADP + phosphate + H(+). With respect to regulation, activated by calmodulin. Its function is as follows. This magnesium-dependent enzyme catalyzes the hydrolysis of ATP coupled with the translocation of calcium from the cytosol out of the cell or into organelles. The polypeptide is Putative calcium-transporting ATPase 13, plasma membrane-type (ACA13) (Arabidopsis thaliana (Mouse-ear cress)).